A 695-amino-acid polypeptide reads, in one-letter code: Lactotransferrin (695 aa).

Positions 1-6 are cleaved as a signal peptide; the sequence is LGLCLA. Transferrin-like domains follow at residues 12–339 and 351–680; these read VRWC…NLRE and VVWC…NLRR. Intrachain disulfides connect C15–C51 and C25–C42. Fe(3+) is bound at residue D66. K79 is a catalytic residue. Y98 serves as a coordination point for Fe(3+). 5 disulfide bridges follow: C121–C204, C163–C179, C166–C189, C176–C187, and C237–C251. The hydrogencarbonate site is built by T123, R127, A129, and G130. The N-linked (GlcNAc...) asparagine glycan is linked to N143. Y198 serves as a coordination point for Fe(3+). H259 serves as a coordination point for Fe(3+). S265 (nucleophile) is an active-site residue. N287 carries N-linked (GlcNAc...) asparagine glycosylation. Intrachain disulfides connect C354–C386 and C364–C377. D401 is a Fe(3+) binding site. 8 cysteine pairs are disulfide-bonded: C411-C690, C431-C653, C463-C538, C487-C681, C497-C511, C508-C521, C579-C593, and C631-C636. Position 436 (P436) interacts with D-glucose. Residue Y439 participates in Fe(3+) binding. Hydrogencarbonate contacts are provided by T465, R469, A471, and A472. Residue N482 is glycosylated (N-linked (GlcNAc...) asparagine). Y532 serves as a coordination point for Fe(3+). N600 provides a ligand contact to D-glucose. H601 contacts Fe(3+). Y666 contributes to the D-glucose binding site.

Belongs to the transferrin family. In terms of assembly, monomer. Found in a complex with LTF, CLU, EPPIN and SEMG1. Found in a complex with MPO and LTF; interacts directly with CP, allows Fe(3+) incorporation into LTF and activation of CP ferroxidase activity. In terms of processing, poly-N-acetyllactosaminic carbohydrate moiety seems to be needed for TLR4 activation.

The protein localises to the secreted. Its subcellular location is the cytoplasmic granule. Transferrins are iron binding transport proteins which can bind two Fe(3+) ions in association with the binding of an anion, usually bicarbonate. In terms of biological role, major iron-binding and multifunctional protein found in exocrine fluids such as breast milk and mucosal secretions. Has antimicrobial activity, which depends on the extracellular cation concentration. Antimicrobial properties include bacteriostasis, which is related to its ability to sequester free iron and thus inhibit microbial growth, as well as direct bactericidal properties leading to the release of lipopolysaccharides from the bacterial outer membrane. Can also prevent bacterial biofilm development in P.aeruginosa infection. Has weak antifungal activity against C.albicans. Has anabolic, differentiating and anti-apoptotic effects on osteoblasts and can also inhibit osteoclastogenesis, possibly playing a role in the regulation of bone growth. Promotes binding of species C adenoviruses to epithelial cells, promoting adenovirus infection. Can inhibit papillomavirus infections. Stimulates the TLR4 signaling pathway leading to NF-kappa-B activation and subsequent pro-inflammatory cytokine production while also interfering with the lipopolysaccharide (LPS)-stimulated TLR4 signaling. Inhibits neutrophil granulocyte migration to sites of apoptosis, when secreted by apoptotic cells. Stimulates VEGFA-mediated endothelial cell migration and proliferation. Binds heparin, chondroitin sulfate and possibly other glycosaminoglycans (GAGs). Also binds specifically to pneumococcal surface protein A (PspA), the lipid A portion of bacterial lipopolysaccharide (LPS), lysozyme and DNA. Its function is as follows. Lactoferricin binds to the bacterial surface and is crucial for the bactericidal functions. Has some antiviral activity against papillomavirus infection. N-terminal region shows strong antifungal activity against C.albicans. Contains two BBXB heparin-binding consensus sequences that appear to form the predominate functional GAG-binding site. Functionally, the lactotransferrin transferrin-like domain 1 functions as a serine protease of the peptidase S60 family that cuts arginine rich regions. This function contributes to the antimicrobial activity. Shows a preferential cleavage at -Arg-Ser-Arg-Arg-|- and -Arg-Arg-Ser-Arg-|-, and of Z-Phe-Arg-|-aminomethylcoumarin sites. In Equus caballus (Horse), this protein is Lactotransferrin (LTF).